Consider the following 226-residue polypeptide: N-(5'-phosphoribosyl)anthranilate isomerase (226 aa).

It belongs to the TrpF family.

It carries out the reaction N-(5-phospho-beta-D-ribosyl)anthranilate = 1-(2-carboxyphenylamino)-1-deoxy-D-ribulose 5-phosphate. The protein operates within amino-acid biosynthesis; L-tryptophan biosynthesis; L-tryptophan from chorismate: step 3/5. This Saccharomyces kudriavzevii (strain ATCC MYA-4449 / AS 2.2408 / CBS 8840 / NBRC 1802 / NCYC 2889) (Yeast) protein is N-(5'-phosphoribosyl)anthranilate isomerase (TRP1).